The sequence spans 423 residues: Cytochrome b mRNA maturase bI2 (423 aa).

Topologically, residues 1–31 (MAFRKSNVYLSLVNSYIIDSPQPSSINYWWN) are mitochondrial matrix. The cytochrome b stretch occupies residues 1–143 (MAFRKSNVYL…CVYGQMSHWG (143 aa)). Residues 32–52 (MGSLLGLCLVIQIVTGIFMAM) form a helical membrane-spanning segment. Topologically, residues 53–84 (HYSSNIELAFSSVEHIMRDVHNGYILRYLHAN) are mitochondrial intermembrane. Residues 85-105 (GASFFFMVMFMHMAKGLYYGS) form a helical membrane-spanning segment. Topologically, residues 106–115 (YRSPRVTLWN) are mitochondrial matrix. A helical transmembrane segment spans residues 116–136 (VGVIIFILTIATAFLGYCCVY). At 137–153 (GQMSHWGNMNIASNMFN) the chain is on the mitochondrial intermembrane side. The maturase stretch occupies residues 144 to 423 (NMNIASNMFN…SMKYKLGNYL (280 aa)). The chain crosses the membrane as a helical span at residues 154 to 174 (MMKTIYMMMLMLLIYIFYTIM). Topologically, residues 175-423 (MRQMMKTKEY…SMKYKLGNYL (249 aa)) are mitochondrial matrix.

The protein in the N-terminal section; belongs to the cytochrome b family. In the C-terminal section; belongs to the LAGLIDADG endonuclease family.

Its subcellular location is the mitochondrion inner membrane. Functionally, this protein is responsible for splicing and maturation of cytochrome b mRNA. Specifically, it may be responsible for the splicing specificity of the second intron. The chain is Cytochrome b mRNA maturase bI2 (BI2) from Saccharomyces cerevisiae (strain ATCC 204508 / S288c) (Baker's yeast).